Consider the following 141-residue polypeptide: Large ribosomal subunit protein uL14 (141 aa).

The protein belongs to the universal ribosomal protein uL14 family. As to quaternary structure, part of the 50S ribosomal subunit. Forms a cluster with proteins L3 and L24e, part of which may contact the 16S rRNA in 2 intersubunit bridges.

In terms of biological role, binds to 23S rRNA. Forms part of two intersubunit bridges in the 70S ribosome. This Thermofilum pendens (strain DSM 2475 / Hrk 5) protein is Large ribosomal subunit protein uL14.